A 397-amino-acid chain; its full sequence is tRNA-specific 2-thiouridylase MnmA (397 aa).

Residues 6–13 (AMSGGVDS) and leucine 32 contribute to the ATP site. The active-site Nucleophile is cysteine 101. Cysteine 101 and cysteine 199 are disulfide-bonded. ATP is bound at residue glycine 125. Residues 148-150 (KDQ) form an interaction with tRNA region. Cysteine 199 acts as the Cysteine persulfide intermediate in catalysis.

The protein belongs to the MnmA/TRMU family.

It is found in the cytoplasm. The enzyme catalyses S-sulfanyl-L-cysteinyl-[protein] + uridine(34) in tRNA + AH2 + ATP = 2-thiouridine(34) in tRNA + L-cysteinyl-[protein] + A + AMP + diphosphate + H(+). Its function is as follows. Catalyzes the 2-thiolation of uridine at the wobble position (U34) of tRNA, leading to the formation of s(2)U34. The protein is tRNA-specific 2-thiouridylase MnmA of Clavibacter sepedonicus (Clavibacter michiganensis subsp. sepedonicus).